The primary structure comprises 421 residues: Testin (421 aa).

Positions 92–199 (MILTNPVAAK…GDVKLPCEMD (108 aa)) constitute a PET domain. A disordered region spans residues 133 to 164 (EKQPVAGSEGAQYRKKQLAKQLPAHDQDPSKC). Over residues 155–164 (PAHDQDPSKC) the composition is skewed to basic and acidic residues. LIM zinc-binding domains follow at residues 234-297 (YSCY…CDSE), 299-359 (PRCA…NHAV), and 362-421 (QGCH…KMMS).

Belongs to the prickle / espinas / testin family. As to quaternary structure, interacts via LIM domain 1 with ZYX. Interacts (via LIM domain 3) with ENAH and VASP. Interacts with ALKBH4, talin, actin, alpha-actinin, GRIP1 and PXN. Interacts (via LIM domain 2) with ACTL7A (via N-terminus). Heterodimer with ACTL7A; the heterodimer interacts with ENAH to form a heterotrimer.

It is found in the cytoplasm. The protein localises to the cell junction. Its subcellular location is the focal adhesion. Functionally, scaffold protein that may play a role in cell adhesion, cell spreading and in the reorganization of the actin cytoskeleton. Plays a role in the regulation of cell proliferation. May act as a tumor suppressor. In Papio anubis (Olive baboon), this protein is Testin (TES).